Reading from the N-terminus, the 143-residue chain is Holo-[acyl-carrier-protein] synthase (143 aa).

Residues D9 and E63 each contribute to the Mg(2+) site.

Belongs to the P-Pant transferase superfamily. AcpS family. The cofactor is Mg(2+).

The protein localises to the cytoplasm. It catalyses the reaction apo-[ACP] + CoA = holo-[ACP] + adenosine 3',5'-bisphosphate + H(+). In terms of biological role, transfers the 4'-phosphopantetheine moiety from coenzyme A to a Ser of acyl-carrier-protein. In Burkholderia pseudomallei (strain 1106a), this protein is Holo-[acyl-carrier-protein] synthase.